The sequence spans 494 residues: Cobyric acid synthase (494 aa).

Residues 254–453 (KQTVAVIAYP…LHGLFEDPGA (200 aa)) enclose the GATase cobBQ-type domain. Catalysis depends on C338, which acts as the Nucleophile. H445 is a catalytic residue.

This sequence belongs to the CobB/CobQ family. CobQ subfamily.

Its pathway is cofactor biosynthesis; adenosylcobalamin biosynthesis. In terms of biological role, catalyzes amidations at positions B, D, E, and G on adenosylcobyrinic A,C-diamide. NH(2) groups are provided by glutamine, and one molecule of ATP is hydrogenolyzed for each amidation. This chain is Cobyric acid synthase, found in Albidiferax ferrireducens (strain ATCC BAA-621 / DSM 15236 / T118) (Rhodoferax ferrireducens).